The sequence spans 307 residues: Ribosomal protein L11 methyltransferase (307 aa).

Thr-162, Gly-183, Asp-205, and Asn-244 together coordinate S-adenosyl-L-methionine.

This sequence belongs to the methyltransferase superfamily. PrmA family.

It is found in the cytoplasm. It catalyses the reaction L-lysyl-[protein] + 3 S-adenosyl-L-methionine = N(6),N(6),N(6)-trimethyl-L-lysyl-[protein] + 3 S-adenosyl-L-homocysteine + 3 H(+). Its function is as follows. Methylates ribosomal protein L11. The protein is Ribosomal protein L11 methyltransferase of Bordetella bronchiseptica (strain ATCC BAA-588 / NCTC 13252 / RB50) (Alcaligenes bronchisepticus).